The following is a 508-amino-acid chain: Steroid 17-alpha-hydroxylase/17,20 lyase (508 aa).

Asn-202 contributes to the substrate binding site. Residue Cys-442 coordinates heme.

The protein belongs to the cytochrome P450 family. Heme is required as a cofactor. In terms of processing, phosphorylation is necessary for 17,20-lyase, but not for 17-alpha-hydroxylase activity.

The protein localises to the endoplasmic reticulum membrane. It localises to the microsome membrane. It carries out the reaction a C21-steroid + reduced [NADPH--hemoprotein reductase] + O2 = a 17alpha-hydroxy-C21-steroid + oxidized [NADPH--hemoprotein reductase] + H2O + H(+). The catalysed reaction is progesterone + reduced [NADPH--hemoprotein reductase] + O2 = 17alpha-hydroxyprogesterone + oxidized [NADPH--hemoprotein reductase] + H2O + H(+). It catalyses the reaction pregnenolone + reduced [NADPH--hemoprotein reductase] + O2 = 17alpha-hydroxypregnenolone + oxidized [NADPH--hemoprotein reductase] + H2O + H(+). The enzyme catalyses 17alpha-hydroxyprogesterone + reduced [NADPH--hemoprotein reductase] + O2 = androst-4-ene-3,17-dione + acetate + oxidized [NADPH--hemoprotein reductase] + H2O + 2 H(+). It carries out the reaction 17alpha-hydroxyprogesterone + reduced [NADPH--hemoprotein reductase] + O2 = 16alpha,17alpha-dihydroxyprogesterone + oxidized [NADPH--hemoprotein reductase] + H2O + H(+). The catalysed reaction is 16alpha,17alpha-dihydroxyprogesterone + reduced [NADPH--hemoprotein reductase] + O2 = 6beta,16alpha,17alpha-trihydroxyprogesterone + oxidized [NADPH--hemoprotein reductase] + H2O + H(+). It catalyses the reaction 17alpha-hydroxypregnenolone + reduced [NADPH--hemoprotein reductase] + O2 = 3beta-hydroxyandrost-5-en-17-one + acetate + oxidized [NADPH--hemoprotein reductase] + H2O + 2 H(+). The enzyme catalyses 16alpha,17alpha-dihydroxypregnenolone + reduced [NADPH--hemoprotein reductase] + O2 = 3beta,16alpha-dihydroxy-androst-5-en-17-one + acetate + oxidized [NADPH--hemoprotein reductase] + H2O + 2 H(+). It carries out the reaction 3beta-hydroxyandrost-5-en-17-one + reduced [NADPH--hemoprotein reductase] + O2 = 3beta,16alpha-dihydroxy-androst-5-en-17-one + oxidized [NADPH--hemoprotein reductase] + H2O + H(+). The catalysed reaction is androst-4-ene-3,17-dione + reduced [NADPH--hemoprotein reductase] + O2 = 16alpha-hydroxyandrost-4-ene-3,17-dione + oxidized [NADPH--hemoprotein reductase] + H2O + H(+). It functions in the pathway steroid hormone biosynthesis. Its pathway is steroid biosynthesis; glucocorticoid biosynthesis. Its activity is regulated as follows. Regulated predominantly by intracellular cAMP levels. The 17,20-lyase activity is stimulated by cytochrome b5, which acts as an allosteric effector increasing the Vmax of the lyase activity. Functionally, a cytochrome P450 monooxygenase involved in corticoid and androgen biosynthesis. Catalyzes 17-alpha hydroxylation of C21 steroids, which is common for both pathways. A second oxidative step, required only for androgen synthesis, involves an acyl-carbon cleavage. The 17-alpha hydroxy intermediates, as part of adrenal glucocorticoids biosynthesis pathway, are precursors of cortisol. Hydroxylates steroid hormones, pregnenolone and progesterone to form 17-alpha hydroxy metabolites, followed by the cleavage of the C17-C20 bond to form C19 steroids, dehydroepiandrosterone (DHEA) and androstenedione. Has 16-alpha hydroxylase activity. Catalyzes 16-alpha hydroxylation of 17-alpha hydroxy pregnenolone, followed by the cleavage of the C17-C20 bond to form 16-alpha-hydroxy DHEA. Also 16-alpha hydroxylates androgens, relevant for estriol synthesis. Mechanistically, uses molecular oxygen inserting one oxygen atom into a substrate, and reducing the second into a water molecule, with two electrons provided by NADPH via cytochrome P450 reductase (CPR; NADPH-ferrihemoprotein reductase). This chain is Steroid 17-alpha-hydroxylase/17,20 lyase, found in Homo sapiens (Human).